A 207-amino-acid chain; its full sequence is Sodium/potassium-transporting ATPase subunit beta-1-interacting protein 1 (207 aa).

3 helical membrane-spanning segments follow: residues 2–22 (GRCS…AAAL), 35–55 (APIL…LGTL), and 62–82 (LILY…IICF). N-linked (GlcNAc...) asparagine glycosylation is present at Asn-100. Residues 147–167 (ALSSALQIFLALFGFVYACYV) form a helical membrane-spanning segment.

It belongs to the NKAIN family. As to quaternary structure, interacts with atp1b1 C-terminus.

It is found in the cell membrane. The polypeptide is Sodium/potassium-transporting ATPase subunit beta-1-interacting protein 1 (nkain1) (Xenopus laevis (African clawed frog)).